The primary structure comprises 86 residues: Large ribosomal subunit protein bL28 (86 aa).

The protein belongs to the bacterial ribosomal protein bL28 family.

In Phocaeicola vulgatus (strain ATCC 8482 / DSM 1447 / JCM 5826 / CCUG 4940 / NBRC 14291 / NCTC 11154) (Bacteroides vulgatus), this protein is Large ribosomal subunit protein bL28.